A 412-amino-acid chain; its full sequence is MAEEAKVDVKTSAKKDIRNYLCQYCGISRSKNYLITKHIQSHHQMELEEERDDEACEVDEESSSNHTCQECGAEFKKPAHLKQHMQSHSLERSFTCYVDDCAASYRRKDHLNRHLLTHKGKLFKCPKENCKSEFSVQGNVGRHVKKYHSNDNRDKDNTGLGDGDKDNTCKGDDDKEKSGSGGCEKENEGNGGSGKDNNGNGDSQPAECSTGQKQVVCKEIGCGKAFKYPSQLQKHQDSHVKLDSVEAFCSEPGCMKYFTNEECLKSHIRSCHQHINCEICGSKHLKKNIKRHLRTHDEDSSPGEIKCEVEGCSSTFSKASNLQKHMKAVHDDIRPFVCGFPGCGMRFAYKHVRNKHENSGYHVYTCGDFVETDEDFTSRPRGGLKRKQVTAEMLVRKRVMPPRFDAEEHETC.

The C2H2-type 1; degenerate zinc-finger motif lies at 20-43 (YLCQYCGISRSKNYLITKHIQSHH). C2H2-type zinc fingers lie at residues 66–88 (HTCQECGAEFKKPAHLKQHMQSH), 94–118 (FTCYVDDCAASYRRKDHLNRHLLTH), and 123–148 (FKCPKENCKSEFSVQGNVGRHVKKYH). The interval 144–207 (VKKYHSNDNR…NGNGDSQPAE (64 aa)) is disordered. Over residues 148-188 (HSNDNRDKDNTGLGDGDKDNTCKGDDDKEKSGSGGCEKENE) the composition is skewed to basic and acidic residues. Residue lysine 185 forms a Glycyl lysine isopeptide (Lys-Gly) (interchain with G-Cter in ubiquitin) linkage. The segment at 215–239 (VVCKEIGCGKAFKYPSQLQKHQDSH) adopts a C2H2-type 5 zinc-finger fold. The C2H2-type 6; degenerate zinc-finger motif lies at 247 to 272 (AFCSEPGCMKYFTNEECLKSHIRSCH). The C2H2-type 7; degenerate zinc finger occupies 275-296 (INCEICGSKHLKKNIKRHLRTH). A C2H2-type 8 zinc finger spans residues 305 to 330 (IKCEVEGCSSTFSKASNLQKHMKAVH). The segment at 336–362 (FVCGFPGCGMRFAYKHVRNKHENSGYH) adopts a C2H2-type 9; degenerate zinc-finger fold. Positions 384 to 391 (LKRKQVTA) match the Nuclear localization signal motif.

Protein product TFIIIA (44 kDa) is proteolytically cleaved into TFIIIA-C (34 kDa). As to expression, expressed in seedlings, flowers, siliques and seeds.

The protein resides in the nucleus. The protein localises to the nucleolus. Essential protein. Isoform 1 is a transcription activator the binds both 5S rDNA and 5S rRNA and stimulates the transcription of 5S rRNA gene. Isoform 1 regulates 5S rRNA levels during development. This is Transcription factor IIIA from Arabidopsis thaliana (Mouse-ear cress).